Reading from the N-terminus, the 397-residue chain is Kappa-carrageenase (397 aa).

Positions 1-25 (MKPISIVAFPIPAISMLLLSAVSQA) are cleaved as a signal peptide. Residues 26-299 (ASMQPPIAKP…YVRTWVKVGN (274 aa)) form the GH16 domain. Residues cysteine 98 and cysteine 268 are joined by a disulfide bond. Glutamate 163 functions as the Nucleophile in the catalytic mechanism. Aspartate 165 is an active-site residue. Catalysis depends on glutamate 168, which acts as the Proton donor. Residues 316–387 (AVNSVQLSAA…TITVKTKNKG (72 aa)) form the BIG2 domain.

It belongs to the glycosyl hydrolase 16 family.

It localises to the periplasm. It carries out the reaction Endohydrolysis of (1-&gt;4)-beta-D-linkages between D-galactose 4-sulfate and 3,6-anhydro-D-galactose in kappa-carrageenans.. The chain is Kappa-carrageenase (cgkA) from Pseudoalteromonas carrageenovora (Alteromonas carrageenovora).